The chain runs to 348 residues: Isopentenyl-diphosphate delta-isomerase (348 aa).

A substrate-binding site is contributed by 5–6 (RK). FMN-binding positions include Ser61, 62-64 (SMT), Ser92, and Asn120. 92 to 94 (SMR) is a substrate binding site. Gln159 provides a ligand contact to substrate. Glu160 is a binding site for Mg(2+). Residues Lys189, Ser214, Thr219, 269-271 (GLR), and 290-291 (AR) each bind FMN.

The protein belongs to the IPP isomerase type 2 family. In terms of assembly, homooctamer. Dimer of tetramers. Requires FMN as cofactor. The cofactor is NADPH. It depends on Mg(2+) as a cofactor.

It is found in the cytoplasm. It carries out the reaction isopentenyl diphosphate = dimethylallyl diphosphate. Its function is as follows. Involved in the biosynthesis of isoprenoids. Catalyzes the 1,3-allylic rearrangement of the homoallylic substrate isopentenyl (IPP) to its allylic isomer, dimethylallyl diphosphate (DMAPP). The chain is Isopentenyl-diphosphate delta-isomerase from Thermoplasma acidophilum (strain ATCC 25905 / DSM 1728 / JCM 9062 / NBRC 15155 / AMRC-C165).